The sequence spans 396 residues: Tryptophan synthase beta chain (396 aa).

Lys-86 carries the N6-(pyridoxal phosphate)lysine modification.

Belongs to the TrpB family. As to quaternary structure, tetramer of two alpha and two beta chains. The cofactor is pyridoxal 5'-phosphate.

It carries out the reaction (1S,2R)-1-C-(indol-3-yl)glycerol 3-phosphate + L-serine = D-glyceraldehyde 3-phosphate + L-tryptophan + H2O. Its pathway is amino-acid biosynthesis; L-tryptophan biosynthesis; L-tryptophan from chorismate: step 5/5. Functionally, the beta subunit is responsible for the synthesis of L-tryptophan from indole and L-serine. The sequence is that of Tryptophan synthase beta chain from Photobacterium profundum (strain SS9).